The following is a 363-amino-acid chain: S-methylmethionine--homocysteine S-methyltransferase BHMT2 (363 aa).

The Hcy-binding domain occupies arginine 11–leucine 305. Residues cysteine 208, cysteine 290, and cysteine 291 each contribute to the Zn(2+) site. Serine 321 carries the post-translational modification Phosphoserine.

In terms of assembly, homotetramer. Requires Zn(2+) as cofactor.

It catalyses the reaction S-methyl-L-methionine + L-homocysteine = 2 L-methionine + H(+). It participates in amino-acid biosynthesis; L-methionine biosynthesis via de novo pathway; L-methionine from L-homocysteine (BhmT route): step 1/1. In terms of biological role, involved in the regulation of homocysteine metabolism. Converts betaine and homocysteine to dimethylglycine and methionine, respectively. This reaction is also required for the irreversible oxidation of choline. This chain is S-methylmethionine--homocysteine S-methyltransferase BHMT2 (BHMT2), found in Pongo abelii (Sumatran orangutan).